A 460-amino-acid polypeptide reads, in one-letter code: UDP-N-acetylmuramoyl-tripeptide--D-alanyl-D-alanine ligase (460 aa).

115–121 (GSSGKTS) provides a ligand contact to ATP.

It belongs to the MurCDEF family. MurF subfamily.

Its subcellular location is the cytoplasm. The enzyme catalyses D-alanyl-D-alanine + UDP-N-acetyl-alpha-D-muramoyl-L-alanyl-gamma-D-glutamyl-meso-2,6-diaminopimelate + ATP = UDP-N-acetyl-alpha-D-muramoyl-L-alanyl-gamma-D-glutamyl-meso-2,6-diaminopimeloyl-D-alanyl-D-alanine + ADP + phosphate + H(+). Its pathway is cell wall biogenesis; peptidoglycan biosynthesis. Functionally, involved in cell wall formation. Catalyzes the final step in the synthesis of UDP-N-acetylmuramoyl-pentapeptide, the precursor of murein. In Buchnera aphidicola subsp. Baizongia pistaciae (strain Bp), this protein is UDP-N-acetylmuramoyl-tripeptide--D-alanyl-D-alanine ligase.